Reading from the N-terminus, the 392-residue chain is Phosphoglycerate kinase (392 aa).

Residues 26–28 (DLN), Arg41, 64–67 (HLGR), Arg118, and Arg151 each bind substrate. ATP contacts are provided by residues Lys202, Glu319, and 345–348 (GGDT).

It belongs to the phosphoglycerate kinase family. In terms of assembly, monomer.

The protein resides in the cytoplasm. The enzyme catalyses (2R)-3-phosphoglycerate + ATP = (2R)-3-phospho-glyceroyl phosphate + ADP. Its pathway is carbohydrate degradation; glycolysis; pyruvate from D-glyceraldehyde 3-phosphate: step 2/5. This Photobacterium profundum (strain SS9) protein is Phosphoglycerate kinase.